We begin with the raw amino-acid sequence, 75 residues long: Protein BRICK1 (75 aa).

An N-acetylalanine modification is found at Ala2. Residues 41-72 (MSCRSRLATLNEKLTALERRIEYIEARVTKGE) are a coiled coil.

The protein belongs to the BRK1 family. Homotrimer when in free form. Directly interacts with WASF2. Component of the WAVE1 complex composed of ABI2, CYFIP1 or CYFIP2, BRK1, NCKAP1 and WASF1/WAVE1. Within the complex, a heterodimer containing NCKAP1 and CYFIP1 interacts with a heterotrimer formed by WAVE1, ABI2 and BRK1.

It is found in the cytoplasm. The protein localises to the cytoskeleton. Its function is as follows. Involved in regulation of actin and microtubule organization. Part of a WAVE complex that activates the Arp2/3 complex. As component of the WAVE1 complex, required for BDNF-NTRK2 endocytic trafficking and signaling from early endosomes. The protein is Protein BRICK1 (BRK1) of Homo sapiens (Human).